The following is a 170-amino-acid chain: Ureidoglycolate lyase (170 aa).

Belongs to the ureidoglycolate lyase family. Homodimer. Ni(2+) is required as a cofactor.

It carries out the reaction (S)-ureidoglycolate = urea + glyoxylate. It functions in the pathway nitrogen metabolism; (S)-allantoin degradation. Functionally, catalyzes the catabolism of the allantoin degradation intermediate (S)-ureidoglycolate, generating urea and glyoxylate. Involved in the utilization of allantoin as nitrogen source. The sequence is that of Ureidoglycolate lyase from Pseudomonas savastanoi pv. phaseolicola (strain 1448A / Race 6) (Pseudomonas syringae pv. phaseolicola (strain 1448A / Race 6)).